The chain runs to 218 residues: Histone H1 (218 aa).

2 stretches are compositionally biased toward low complexity: residues 1–19 (MSET…GAKA) and 27–39 (AAGG…PAGP). Disordered regions lie at residues 1 to 41 (MSET…GPSV) and 89 to 218 (VGKG…PKKK). Serine 2 carries the N-acetylserine modification. One can recognise an H15 domain in the interval 37 to 110 (AGPSVTELIT…GASGSFKLNK (74 aa)). Basic residues-rich tracts occupy residues 119–133 (ATKK…KPAA), 141–158 (KKPK…KAKK), 166–184 (KAAK…KKAA), and 191–218 (KAVK…PKKK).

The protein belongs to the histone H1/H5 family.

The protein localises to the nucleus. The protein resides in the chromosome. Functionally, histones H1 are necessary for the condensation of nucleosome chains into higher-order structures. In Anas platyrhynchos (Mallard), this protein is Histone H1.